The primary structure comprises 489 residues: Neuropeptide CCHamide-2 receptor (489 aa).

The Extracellular segment spans residues 1–74 (MYASLMDVGQ…DRPETYIVTV (74 aa)). Residues Asn-25 and Asn-50 are each glycosylated (N-linked (GlcNAc...) asparagine). The helical transmembrane segment at 75 to 95 (LYTLIFIVGVLGNGTLVIIFF) threads the bilayer. Topologically, residues 96–107 (RHRSMRNIPNTY) are cytoplasmic. Residues 108–128 (ILSLALADLLVILVCVPVATI) form a helical membrane-spanning segment. Over 129–143 (VYTQESWPFERNMCR) the chain is Extracellular. The cysteines at positions 142 and 225 are disulfide-linked. A helical transmembrane segment spans residues 144 to 164 (ISEFFKDISIGVSVFTLTALS). The Cytoplasmic portion of the chain corresponds to 165 to 184 (GERYCAIVNPLRKLQTKPLT). Residues 185 to 205 (VFTAVMIWILAILLGMPSVLF) traverse the membrane as a helical segment. The Extracellular segment spans residues 206-235 (SDIKSYPVFTATGNMTIEVCSPFRDPEYAK). Asn-219 carries an N-linked (GlcNAc...) asparagine glycan. A helical membrane pass occupies residues 236–256 (FMVAGKALVYYLLPLSIIGAL). The Cytoplasmic segment spans residues 257–293 (YIMMAKRLHMSARNMPGEQQSMQSRTQARARLHVARM). Residues 294-314 (VVAFVVVFFICFFPYHVFELW) traverse the membrane as a helical segment. The Extracellular portion of the chain corresponds to 315 to 333 (YHFYPTAEEDFDEFWNVLR). A helical membrane pass occupies residues 334–354 (IVGFCTSFLNSCVNPVALYCV). Residues 355–489 (SGVFRQHFNR…NRYESGVMRY (135 aa)) lie on the Cytoplasmic side of the membrane. The interval 438-468 (SFHRQDSMPLQHGNAHGGGAGGGSSGLGAGG) is disordered. Residues 452-468 (AHGGGAGGGSSGLGAGG) are compositionally biased toward gly residues.

The protein belongs to the G-protein coupled receptor 1 family. In terms of tissue distribution, highly expressed in larval brain. Also highly expressed in adult brain with very low levels in larval and adult gut.

It localises to the cell membrane. In terms of biological role, receptor for the neuropeptide CCHamide-2. The polypeptide is Neuropeptide CCHamide-2 receptor (Drosophila melanogaster (Fruit fly)).